Here is a 962-residue protein sequence, read N- to C-terminus: MEDCNVHSAASILASVKEQEARFERLTRALEQERRHVALQLERAQQPGMVSGGMGSGQPLPMAWQQLVLQEQSPGSQASLATMPEAPDVLEETVTVEEDPGTPTSHVSIVTSEDGTTRRTETKVTKTVKTVTTRTVRQVPVGPDGLPLLDGGPPLGPFADGALDRHFLLRGGGPVATLSRAYLSSGGGFPEGPEPRDSPSYGSLSRGLGMRPPRAGPLGPGPGDGCFTLPGHREAFPVGPEPGPPGGRSLPERFQAEPYGLEDDTRSLAADDEGGPELEPDYGTATRRRPECGRGLHTRAYEDTADDGGELADERPAFPMVTAPLAQPERGSMGSLDRLVRRSPSVDSARKEPRWRDPELPEVLAMLRHPVDPVKANAAAYLQHLCFENEGVKRRVRQLRGLPLLVALLDHPRAEVRRRACGALRNLSYGRDTDNKAAIRDCGGVPALVRLLRAARDNEVRELVTGTLWNLSSYEPLKMVIIDHGLQTLTHEVIVPHSGWEREPNEDSKPRDAEWTTVFKNTSGCLRNVSSDGAEARRRLRECEGLVDALLHALQSAVGRKDTDNKSVENCVCIMRNLSYHVHKEVPGADRYQEAEPGPLGSAVGSQRRRRDDASCFGGKKAKEEWFHQGKKDGEMDRNFDTLDLPKRTEAAKGFELLYQPEVVRLYLSLLTESRNFNTLEAAAGALQNLSAGNWMWATYIRATVRKERGLPVLVELLQSETDKVVRAVAIALRNLSLDRRNKDLIGSYAMAELVRNVRNAQAPPRPGACLEEDTVVAVLNTIHEIVSDSLDNARSLLQARGVPALVALVASSQSVREAKAASHVLQTVWSYKELRGTLQKDGWTKARFQSAAATAKGPKGALSPGGFDDSTLPLVDKSLEGEKTGSRDVIPMDALGPDGYSTVDRRERRPRGASSAGEASEKEPLKLDPSRKAPPPGPSRPAVRLVDAVGDAKPQPVDSWV.

Residues 8–46 (SAASILASVKEQEARFERLTRALEQERRHVALQLERAQQ) are a coiled coil. The tract at residues 95–122 (TVEEDPGTPTSHVSIVTSEDGTTRRTET) is disordered. Thr-102 and Thr-104 each carry phosphothreonine. Over residues 102-114 (TPTSHVSIVTSED) the composition is skewed to polar residues. Arg-170 carries the omega-N-methylarginine modification. Disordered regions lie at residues 186 to 253 (GGGF…LPER) and 266 to 290 (RSLA…RRRP). Residues 206 to 217 (RGLGMRPPRAGP) show a composition bias toward low complexity. Phosphoserine is present on Ser-267. Positions 270–280 (ADDEGGPELEP) are enriched in acidic residues. Ser-332, Ser-335, Ser-343, and Ser-345 each carry phosphoserine. ARM repeat units follow at residues 348–387 (SARK…HLCF), 390–429 (EGVK…NLSY), 433–467 (TDNK…VTGT), 468–508 (LWNL…NEDS), 526–565 (LRNV…DTDN), and 575–622 (MRNL…GKKA). Residues 590-614 (DRYQEAEPGPLGSAVGSQRRRRDDA) form a disordered region. Phosphoserine is present on Ser-606. The short motif at 607 to 623 (QRRRRDDASCFGGKKAK) is the Nuclear localization signal element. Residue Thr-642 is modified to Phosphothreonine. ARM repeat units lie at residues 646–686 (PKRT…AAGA), 699–738 (TYIR…NLSL), 739–781 (DRRN…AVLN), and 782–826 (TIHE…SHVL). The tract at residues 776–962 (VVAVLNTIHE…AKPQPVDSWV (187 aa)) is required for interaction with RNA-binding proteins DDX5, HNRNPH2 and SRSF1 and with mRNAs. The segment at 854 to 962 (ATAKGPKGAL…AKPQPVDSWV (109 aa)) is disordered. Ser-864 and Ser-871 each carry phosphoserine. At Thr-872 the chain carries Phosphothreonine. Basic and acidic residues predominate over residues 878–887 (KSLEGEKTGS). Position 915 is a phosphoserine (Ser-915). The span at 920-932 (ASEKEPLKLDPSR) shows a compositional bias: basic and acidic residues.

It belongs to the beta-catenin family. In terms of assembly, component of a ribonucleoprotein complex containing mRNAs and RNA-binding proteins including DDX5, HNRNPH2 and SRSF1 as well as ARVCF. Interacts (via the extreme C-terminus) with FRMPD2 (via the PDZ 2 domain). Interacts with CCDC85B. As to expression, found in all the examined tissues including heart, brain, liver and kidney. Found at low level in lung. Expressed in dermal connective tissue, salivary gland duct and in the corneal layer (at protein level). Expressed in arrector pili muscle (at protein level). High levels detected in epithelial cells with lower levels found in fibroblasts and T lymphocytes.

The protein localises to the cell junction. It localises to the adherens junction. It is found in the nucleus. The protein resides in the cytoplasm. Its function is as follows. Contributes to the regulation of alternative splicing of pre-mRNAs. This is Splicing regulator ARVCF from Homo sapiens (Human).